The primary structure comprises 377 residues: L-arabinitol 4-dehydrogenase (377 aa).

Positions 66, 91, 92, 121, 124, 127, 135, and 176 each coordinate Zn(2+). Residues 203 to 204 (PI), D224, R229, I296, and 320 to 322 (QYR) each bind NAD(+).

Belongs to the zinc-containing alcohol dehydrogenase family. As to quaternary structure, homotetramer. Zn(2+) serves as cofactor. The N-terminus is blocked.

The enzyme catalyses L-arabinitol + NAD(+) = L-xylulose + NADH + H(+). The protein operates within carbohydrate degradation; L-arabinose degradation via L-arabinitol; D-xylulose 5-phosphate from L-arabinose (fungal route): step 2/5. Catalyzes the NAD-dependent oxidation of L-arabinitol to L-xylulose in the fungal L-arabinose catabolic pathway. L-arabinose catabolism is important for using plant material as a carbon source. Can partially compensate for xylitol dehydrogenase in xdh1 mutants. Also oxidizes galactitol to L-xylo-3-hexulose as an alternative to the standard Leloir pathway for D-galactose metabolism. NADP cannot act as a cosubstrate. The polypeptide is L-arabinitol 4-dehydrogenase (lad1) (Hypocrea jecorina (Trichoderma reesei)).